The chain runs to 104 residues: Large ribosomal subunit protein bL21 (104 aa).

Belongs to the bacterial ribosomal protein bL21 family. In terms of assembly, part of the 50S ribosomal subunit. Contacts protein L20.

Its function is as follows. This protein binds to 23S rRNA in the presence of protein L20. This Allorhizobium ampelinum (strain ATCC BAA-846 / DSM 112012 / S4) (Agrobacterium vitis (strain S4)) protein is Large ribosomal subunit protein bL21.